The primary structure comprises 228 residues: Small ribosomal subunit protein uS3 (228 aa).

The 69-residue stretch at 39–107 (VREYLQDKLK…PVHINIEEIR (69 aa)) folds into the KH type-2 domain.

Belongs to the universal ribosomal protein uS3 family. In terms of assembly, part of the 30S ribosomal subunit. Forms a tight complex with proteins S10 and S14.

In terms of biological role, binds the lower part of the 30S subunit head. Binds mRNA in the 70S ribosome, positioning it for translation. In Pseudomonas fluorescens (strain ATCC BAA-477 / NRRL B-23932 / Pf-5), this protein is Small ribosomal subunit protein uS3.